The chain runs to 162 residues: SsrA-binding protein (162 aa).

Belongs to the SmpB family.

The protein resides in the cytoplasm. In terms of biological role, required for rescue of stalled ribosomes mediated by trans-translation. Binds to transfer-messenger RNA (tmRNA), required for stable association of tmRNA with ribosomes. tmRNA and SmpB together mimic tRNA shape, replacing the anticodon stem-loop with SmpB. tmRNA is encoded by the ssrA gene; the 2 termini fold to resemble tRNA(Ala) and it encodes a 'tag peptide', a short internal open reading frame. During trans-translation Ala-aminoacylated tmRNA acts like a tRNA, entering the A-site of stalled ribosomes, displacing the stalled mRNA. The ribosome then switches to translate the ORF on the tmRNA; the nascent peptide is terminated with the 'tag peptide' encoded by the tmRNA and targeted for degradation. The ribosome is freed to recommence translation, which seems to be the essential function of trans-translation. This Colwellia psychrerythraea (strain 34H / ATCC BAA-681) (Vibrio psychroerythus) protein is SsrA-binding protein.